The chain runs to 359 residues: Protein RecA (359 aa).

Position 64-71 (64-71 (GHESSGKT)) interacts with ATP. A disordered region spans residues 329–359 (KYSNKDSNDSPKEGSKIKTKVNPAVTQDELI). The span at 331-344 (SNKDSNDSPKEGSK) shows a compositional bias: basic and acidic residues.

This sequence belongs to the RecA family.

It is found in the cytoplasm. Can catalyze the hydrolysis of ATP in the presence of single-stranded DNA, the ATP-dependent uptake of single-stranded DNA by duplex DNA, and the ATP-dependent hybridization of homologous single-stranded DNAs. It interacts with LexA causing its activation and leading to its autocatalytic cleavage. This is Protein RecA from Francisella tularensis subsp. tularensis (strain FSC 198).